The sequence spans 1076 residues: DNA-directed RNA polymerase subunit beta (1076 aa).

It belongs to the RNA polymerase beta chain family. In plastids the minimal PEP RNA polymerase catalytic core is composed of four subunits: alpha, beta, beta', and beta''. When a (nuclear-encoded) sigma factor is associated with the core the holoenzyme is formed, which can initiate transcription.

It localises to the plastid. It is found in the chloroplast. The enzyme catalyses RNA(n) + a ribonucleoside 5'-triphosphate = RNA(n+1) + diphosphate. Its function is as follows. DNA-dependent RNA polymerase catalyzes the transcription of DNA into RNA using the four ribonucleoside triphosphates as substrates. This Lolium perenne (Perennial ryegrass) protein is DNA-directed RNA polymerase subunit beta.